The primary structure comprises 350 residues: tRNA pseudouridine synthase D (350 aa).

Phe-27 is a binding site for substrate. Residue Asp-80 is the Nucleophile of the active site. Residue Asn-129 participates in substrate binding. Positions 155 to 303 constitute a TRUD domain; the sequence is GVPNYFGVQR…VDTTRRAINL (149 aa). Phe-329 is a binding site for substrate.

The protein belongs to the pseudouridine synthase TruD family.

The catalysed reaction is uridine(13) in tRNA = pseudouridine(13) in tRNA. Functionally, responsible for synthesis of pseudouridine from uracil-13 in transfer RNAs. The protein is tRNA pseudouridine synthase D of Proteus mirabilis (strain HI4320).